The sequence spans 216 residues: 2,5-diamino-6-ribosylamino-4(3H)-pyrimidinone 5'-phosphate reductase (216 aa).

NADP(+) is bound by residues Thr51, Asp55, 79-82 (SMAR), Val126, and 148-151 (GSTL).

It belongs to the HTP reductase family. As to quaternary structure, homodimer.

It catalyses the reaction 2,5-diamino-6-(1-D-ribitylamino)pyrimidin-4(3H)-one 5'-phosphate + NADP(+) = 2,5-diamino-6-(1-D-ribosylamino)pyrimidin-4(3H)-one 5'-phosphate + NADPH + H(+). It carries out the reaction 2,5-diamino-6-(1-D-ribitylamino)pyrimidin-4(3H)-one 5'-phosphate + NAD(+) = 2,5-diamino-6-(1-D-ribosylamino)pyrimidin-4(3H)-one 5'-phosphate + NADH + H(+). The protein operates within cofactor biosynthesis; riboflavin biosynthesis. Its function is as follows. Catalyzes an early step in riboflavin biosynthesis, the NADPH-dependent reduction of the ribose side chain of 2,5-diamino-6-ribosylamino-4(3H)-pyrimidinone 5'-phosphate, yielding 2,5-diamino-6-ribitylamino-4(3H)-pyrimidinone 5'-phosphate. The polypeptide is 2,5-diamino-6-ribosylamino-4(3H)-pyrimidinone 5'-phosphate reductase (Methanothermobacter thermautotrophicus (strain ATCC 29096 / DSM 1053 / JCM 10044 / NBRC 100330 / Delta H) (Methanobacterium thermoautotrophicum)).